Here is a 252-residue protein sequence, read N- to C-terminus: Type III pantothenate kinase (252 aa).

6–13 (DIGNTSTA) serves as a coordination point for ATP. 104 to 107 (GADR) is a binding site for substrate. Asp-106 serves as the catalytic Proton acceptor. Residue Asp-128 participates in K(+) binding. Thr-131 contacts ATP. Thr-183 is a binding site for substrate.

Belongs to the type III pantothenate kinase family. As to quaternary structure, homodimer. NH4(+) is required as a cofactor. The cofactor is K(+).

Its subcellular location is the cytoplasm. It carries out the reaction (R)-pantothenate + ATP = (R)-4'-phosphopantothenate + ADP + H(+). It functions in the pathway cofactor biosynthesis; coenzyme A biosynthesis; CoA from (R)-pantothenate: step 1/5. Its function is as follows. Catalyzes the phosphorylation of pantothenate (Pan), the first step in CoA biosynthesis. This Thermus thermophilus (strain ATCC 27634 / DSM 579 / HB8) protein is Type III pantothenate kinase.